The primary structure comprises 464 residues: Argininosuccinate lyase (464 aa).

This sequence belongs to the lyase 1 family. Argininosuccinate lyase subfamily.

It localises to the cytoplasm. It catalyses the reaction 2-(N(omega)-L-arginino)succinate = fumarate + L-arginine. It participates in amino-acid biosynthesis; L-arginine biosynthesis; L-arginine from L-ornithine and carbamoyl phosphate: step 3/3. In Chlorobium phaeobacteroides (strain DSM 266 / SMG 266 / 2430), this protein is Argininosuccinate lyase.